The sequence spans 159 residues: 3-hydroxyacyl-[acyl-carrier-protein] dehydratase FabZ (159 aa).

Histidine 65 is an active-site residue.

It belongs to the thioester dehydratase family. FabZ subfamily.

Its subcellular location is the cytoplasm. The catalysed reaction is a (3R)-hydroxyacyl-[ACP] = a (2E)-enoyl-[ACP] + H2O. Functionally, involved in unsaturated fatty acids biosynthesis. Catalyzes the dehydration of short chain beta-hydroxyacyl-ACPs and long chain saturated and unsaturated beta-hydroxyacyl-ACPs. The polypeptide is 3-hydroxyacyl-[acyl-carrier-protein] dehydratase FabZ (Microcystis aeruginosa (strain NIES-843 / IAM M-2473)).